The sequence spans 344 residues: Dihydroorotate dehydrogenase (quinone) (344 aa).

FMN is bound by residues 65–69 (AGLDK) and Thr89. Lys69 serves as a coordination point for substrate. Residue 114-118 (NRMGF) coordinates substrate. Residues Asn145 and Asn178 each contribute to the FMN site. Position 178 (Asn178) interacts with substrate. The active-site Nucleophile is Ser181. Substrate is bound at residue Asn183. Lys223 and Thr251 together coordinate FMN. 252–253 (NT) serves as a coordination point for substrate. FMN-binding positions include Gly274, Gly303, and 324 to 325 (YS).

The protein belongs to the dihydroorotate dehydrogenase family. Type 2 subfamily. As to quaternary structure, monomer. It depends on FMN as a cofactor.

It is found in the cell membrane. The catalysed reaction is (S)-dihydroorotate + a quinone = orotate + a quinol. It participates in pyrimidine metabolism; UMP biosynthesis via de novo pathway; orotate from (S)-dihydroorotate (quinone route): step 1/1. Catalyzes the conversion of dihydroorotate to orotate with quinone as electron acceptor. This Cupriavidus taiwanensis (strain DSM 17343 / BCRC 17206 / CCUG 44338 / CIP 107171 / LMG 19424 / R1) (Ralstonia taiwanensis (strain LMG 19424)) protein is Dihydroorotate dehydrogenase (quinone).